The following is a 214-amino-acid chain: ATP-dependent Clp protease proteolytic subunit 2 (214 aa).

The Nucleophile role is filled by Ser-110. Residue His-135 is part of the active site.

This sequence belongs to the peptidase S14 family. Fourteen ClpP subunits assemble into 2 heptameric rings which stack back to back to give a disk-like structure with a central cavity, resembling the structure of eukaryotic proteasomes.

It is found in the cytoplasm. The enzyme catalyses Hydrolysis of proteins to small peptides in the presence of ATP and magnesium. alpha-casein is the usual test substrate. In the absence of ATP, only oligopeptides shorter than five residues are hydrolyzed (such as succinyl-Leu-Tyr-|-NHMec, and Leu-Tyr-Leu-|-Tyr-Trp, in which cleavage of the -Tyr-|-Leu- and -Tyr-|-Trp bonds also occurs).. Cleaves peptides in various proteins in a process that requires ATP hydrolysis. Has a chymotrypsin-like activity. Plays a major role in the degradation of misfolded proteins. The chain is ATP-dependent Clp protease proteolytic subunit 2 from Mycobacterium leprae (strain TN).